We begin with the raw amino-acid sequence, 850 residues long: PH domain-containing protein YHR131C (850 aa).

Positions 194–306 constitute a PH domain; it reads RIHSDLVHRS…MYLSIGISVS (113 aa). Basic residues predominate over residues 324–338; the sequence is RRRRRRRRRRRRHTH. Disordered stretches follow at residues 324 to 348, 406 to 428, 451 to 494, 583 to 659, and 793 to 850; these read RRRR…GSFS, SAAS…SGCS, SSRT…GVPV, EASI…TDDS, and TTKD…QITA. Positions 406–416 are enriched in low complexity; the sequence is SAASGESSDNS. Residues 417-428 show a composition bias toward polar residues; the sequence is TLGSTRSLSGCS. Residues 479–489 show a composition bias toward basic and acidic residues; sequence HHESSGGDHPE. Over residues 605-619 the composition is skewed to polar residues; that stretch reads ESATDLSQSSRSLCL. 2 stretches are compositionally biased toward acidic residues: residues 626 to 658 and 799 to 850; these read INDD…DTDD and DHGE…QITA.

The protein localises to the cytoplasm. In Saccharomyces cerevisiae (strain ATCC 204508 / S288c) (Baker's yeast), this protein is PH domain-containing protein YHR131C.